The primary structure comprises 156 residues: Small ribosomal subunit protein uS7 (156 aa).

The protein belongs to the universal ribosomal protein uS7 family. In terms of assembly, part of the 30S ribosomal subunit. Contacts proteins S9 and S11.

Its function is as follows. One of the primary rRNA binding proteins, it binds directly to 16S rRNA where it nucleates assembly of the head domain of the 30S subunit. Is located at the subunit interface close to the decoding center, probably blocks exit of the E-site tRNA. The protein is Small ribosomal subunit protein uS7 of Lactobacillus delbrueckii subsp. bulgaricus (strain ATCC 11842 / DSM 20081 / BCRC 10696 / JCM 1002 / NBRC 13953 / NCIMB 11778 / NCTC 12712 / WDCM 00102 / Lb 14).